Consider the following 954-residue polypeptide: E3 ubiquitin-protein ligase arkadia (954 aa).

Residues 50-66 (LCSDTNKQQRDLNSNGT) show a composition bias toward polar residues. Disordered regions lie at residues 50–175 (LCSD…VSSL) and 193–276 (RKRF…SGGM). Composition is skewed to low complexity over residues 112–131 (SSFS…GDSD) and 232–251 (SSSS…SSST). The short motif at 280-284 (VVVIE) is the SUMO interaction motif 1 (SIM) element. An SUMO interaction motif 2 (SIM) motif is present at residues 305 to 311 (EVEIVTV). Disordered stretches follow at residues 318 to 346 (RTTL…RNRV), 364 to 452 (TVDE…MPRL), and 485 to 509 (HFPH…SFRD). The span at 328 to 337 (WGQNTQSGRT) shows a compositional bias: polar residues. The SUMO interaction motif 3 (SIM) motif lies at 360 to 364 (VVDLT). Residues 385–395 (VSTVSSNTSTS) show a composition bias toward low complexity. The span at 485–496 (HFPHHHHHHHQS) shows a compositional bias: basic residues. The segment at 867–869 (YPH) is ubiquitin binding. Zn(2+) contacts are provided by C902 and C905. The RING-type; atypical zinc finger occupies 902–943 (CTICLSILEEGEDVRRLPCMHLFHQVCVDQWLITNKKCPICR). Residues 917–921 (RLPCM) form a ubiquitin binding region. Zn(2+) contacts are provided by H925 and C928.

The protein belongs to the Arkadia family. As to quaternary structure, monomer.

The protein localises to the nucleus. Its subcellular location is the cytoplasm. It localises to the PML body. It catalyses the reaction S-ubiquitinyl-[E2 ubiquitin-conjugating enzyme]-L-cysteine + [acceptor protein]-L-lysine = [E2 ubiquitin-conjugating enzyme]-L-cysteine + N(6)-ubiquitinyl-[acceptor protein]-L-lysine.. It participates in protein modification; protein ubiquitination. Its activity is regulated as follows. Binds free ubiquitin non-covalently via its RING-type zinc finger. Ubiquitin-binding leads to enhance the E3 ubiquitin-protein ligase activity by stabilizing the ubiquitin-conjugating enzyme E2 (donor ubiquitin) in the 'closed' conformation and activating ubiquitin transfer. In terms of biological role, E3 ubiquitin-protein ligase required for mesoderm patterning during embryonic development. Acts as an enhancer of the transcriptional responses of the smad2/smad3 effectors, which are activated downstream of BMP. Acts by mediating ubiquitination and degradation of SMAD inhibitors such as smad7, inducing their proteasomal degradation and thereby enhancing the transcriptional activity of TGF-beta and BMP. Specifically binds polysumoylated chains via SUMO interaction motifs (SIMs) and mediates ubiquitination of sumoylated substrates. The regulation of the BMP-SMAD signaling is however independent of sumoylation and is not dependent of SUMO interaction motifs (SIMs). The polypeptide is E3 ubiquitin-protein ligase arkadia (rnf111) (Xenopus tropicalis (Western clawed frog)).